We begin with the raw amino-acid sequence, 675 residues long: MMMATKGKRPLRHLTATDKIDAIQRIHDGESKASVARDIGVPESTLRGWCKNEEKLRYMSRQSAENAEKLTNEATAAALTAVAAAELFNGPPEKRLKLEQGLFGNGKLKYDDSFYKSPRGPMNGLDLSGGDKGLGVSGGDIIMNGLHGADFSSKSKEMNLKGYGADLSKHGDPKQADLSMAAISPLTSLSHLSGMSGLAQSPLALSFNEIATNLNLFAQLNNNHNLATMSNLGGLSAAQSLRNARPKANTSQSPRTSNLSDVNGDKNPSLTVRNLAKLQQKNSGDLSNGMMHGINLSDKYKQQPSAAPLGRDTNAPVDEALWYWLKSQQAMLGLNNLYSSMPRPSSPQQSSSPPQQHQQVQHHPSTQTPTPPIVSTPQPTPPSSAPSLTPEDTKNSSWFWQWYKTFGASLMPGDKSNNNTINANANSKQAAYENILYSQLTKGQNSDSLNNNAQPINLNIISSNGPENVKSEPEDLSNHNHSSSNAAAVAAPAEDLQRFNPSPSTSAKSELKQEDDEEQAGPADDESPMESKCNGKVKDVLDNFLFQNPSSNDRASPANLSIRSNNSPRRRSVSPAVSNHHVNSPEPENGDLAHKSDISEDSNHMLVADIKSSAEAVEHGEKFLKWLEACSDPNVTAMQVMQFKYLLNSIKLSAERQQQNAVSSGEERTRVRRRK.

Residues 5 to 56 enclose the HTH psq-type domain; that stretch reads TKGKRPLRHLTATDKIDAIQRIHDGESKASVARDIGVPESTLRGWCKNEEKL. The H-T-H motif DNA-binding region spans 32 to 52; the sequence is KASVARDIGVPESTLRGWCKN. Disordered regions lie at residues 239–269, 337–393, 458–534, 546–596, and 655–675; these read QSLRNARPKANTSQSPRTSNLSDVNGDKNPS, LYSS…PEDT, LNII…SKCN, FQNP…AHKS, and ERQQQNAVSSGEERTRVRRRK. Low complexity predominate over residues 339–368; that stretch reads SSMPRPSSPQQSSSPPQQHQQVQHHPSTQT. Residues 369–384 show a composition bias toward pro residues; it reads PTPPIVSTPQPTPPSS. The span at 469 to 478 shows a compositional bias: basic and acidic residues; sequence VKSEPEDLSN. Positions 479-493 are enriched in low complexity; the sequence is HNHSSSNAAAVAAPA. The segment covering 499-508 has biased composition (polar residues); the sequence is FNPSPSTSAK. Positions 513–528 are enriched in acidic residues; sequence QEDDEEQAGPADDESP. A compositionally biased stretch (low complexity) spans 559–579; that stretch reads NLSIRSNNSPRRRSVSPAVSN.

As to quaternary structure, homomers. Interacts with itself, danr, ey and dac to form a complex (or complexes) containing the RD factors.

The protein localises to the nucleus. Functionally, probable transcription factor with a role in the retinal determination (RD) network. Contributes to differentiation of antenna-specific characteristics. The chain is Protein distal antenna from Aedes aegypti (Yellowfever mosquito).